A 165-amino-acid chain; its full sequence is Phosphopantetheine adenylyltransferase (165 aa).

A substrate-binding site is contributed by Ser-10. Residues 10-11 (SF) and His-18 each bind ATP. Residues Lys-42, Leu-74, and Arg-88 each coordinate substrate. ATP-binding positions include 89–91 (GLR), Glu-99, and 124–130 (YSFISSS).

Belongs to the bacterial CoaD family. In terms of assembly, homohexamer. Mg(2+) serves as cofactor.

It localises to the cytoplasm. It catalyses the reaction (R)-4'-phosphopantetheine + ATP + H(+) = 3'-dephospho-CoA + diphosphate. It functions in the pathway cofactor biosynthesis; coenzyme A biosynthesis; CoA from (R)-pantothenate: step 4/5. Its function is as follows. Reversibly transfers an adenylyl group from ATP to 4'-phosphopantetheine, yielding dephospho-CoA (dPCoA) and pyrophosphate. This Macrococcus caseolyticus (strain JCSC5402) (Macrococcoides caseolyticum) protein is Phosphopantetheine adenylyltransferase.